A 491-amino-acid chain; its full sequence is Proline--tRNA ligase (491 aa).

This sequence belongs to the class-II aminoacyl-tRNA synthetase family. ProS type 3 subfamily. As to quaternary structure, homodimer.

It is found in the cytoplasm. The catalysed reaction is tRNA(Pro) + L-proline + ATP = L-prolyl-tRNA(Pro) + AMP + diphosphate. Its function is as follows. Catalyzes the attachment of proline to tRNA(Pro) in a two-step reaction: proline is first activated by ATP to form Pro-AMP and then transferred to the acceptor end of tRNA(Pro). The chain is Proline--tRNA ligase from Amoebophilus asiaticus (strain 5a2).